A 527-amino-acid polypeptide reads, in one-letter code: Transcription factor RBF1 (527 aa).

Disordered regions lie at residues 1 to 36 (MSSN…IGAS), 258 to 281 (ANLY…HNEE), 328 to 365 (HHLL…QQAA), 395 to 433 (QLSQ…HGLD), and 470 to 527 (TQGN…SGFL). The DNA-binding element occupies 160–300 (HVRDALTTDE…LRMINPQHNH (141 aa)). Residues 263–281 (NEKDQKRKNKPDEPGHNEE) are compositionally biased toward basic and acidic residues. Low complexity-rich tracts occupy residues 332–365 (QQEQ…QQAA) and 395–428 (QLSQ…PQQT).

The protein belongs to the RBF1 family.

The protein localises to the nucleus. Its subcellular location is the chromosome. It is found in the telomere. Its function is as follows. Transcriptional activator that binds to the RPG box and to telomeres. Involved in the regulation of the transition between yeast and filamentous forms and plays a role in virulence. Induces expression of HWP1, a major hyphal cell protein and virulence factor. This Candida albicans (Yeast) protein is Transcription factor RBF1 (RBF1).